Here is a 540-residue protein sequence, read N- to C-terminus: Solute carrier family 22 member 7 (540 aa).

Transmembrane regions (helical) follow at residues 21–41 (LVLLALPRFLLPMHFLLPIFM), 144–164 (VTSTCFFIGVLLGAVVYGYLS), 172–192 (LLLVAYVSTLALGLMSAASVN), 202–222 (LTGSALAGFTIIVLPLELEWL), 232–252 (VISTTFWTGGVLLLTLVGYLI), 257–277 (WLLLAATLPCVPGIISIWWVP), 344–364 (VSLCCMMMWFGVNFSYYGLTL), 378–398 (LLFGAVEVPSKITVFFLVRLV), 402–422 (LTEAGMLLATALTFGISLLVS), 429–449 (ITALVVIGKAFSEAAFTTAYL), 462–484 (TGMGFTALIGRLGASLAPLVVLL), and 488–510 (WLLLPKLAYGGISFLAACTVLLL).

It belongs to the major facilitator (TC 2.A.1) superfamily. Organic cation transporter (TC 2.A.1.19) family. In terms of tissue distribution, abundant expression in male and female kidney. In kidney, expressed at the brush border of the proximal tubule S3 segment (S3) in the outer stripe and medullary rays. In kidney, expression is higher in female than male. Also expressed in female liver.

It is found in the basolateral cell membrane. Its subcellular location is the apical cell membrane. The protein resides in the cell membrane. The enzyme catalyses orotate(out) + L-glutamate(in) = orotate(in) + L-glutamate(out). It carries out the reaction 3',5'-cyclic GMP(in) = 3',5'-cyclic GMP(out). The catalysed reaction is GMP(in) = GMP(out). It catalyses the reaction 2'-deoxyguanosine(in) = 2'-deoxyguanosine(out). The enzyme catalyses GDP(in) = GDP(out). It carries out the reaction guanosine(in) = guanosine(out). The catalysed reaction is GTP(in) = GTP(out). It catalyses the reaction 3',5'-cyclic AMP(in) = 3',5'-cyclic AMP(out). The enzyme catalyses creatinine(in) = creatinine(out). It carries out the reaction prostaglandin E2(out) = prostaglandin E2(in). The catalysed reaction is 2-oxoglutarate(in) = 2-oxoglutarate(out). It catalyses the reaction glutarate(in) = glutarate(out). The enzyme catalyses urate(out) = urate(in). It carries out the reaction estrone 3-sulfate(out) = estrone 3-sulfate(in). Functions as a Na(+)-independent bidirectional multispecific transporter. Contributes to the renal and hepatic elimination of endogenous organic compounds from the systemic circulation into the urine and bile, respectively. Capable of transporting a wide range of purine and pyrimidine nucleobases, nucleosides, and nucleotides with cGMP, 2'deoxyguanosine and GMP being the preferred substrates. Functions as a pH- and chloride-independent cGMP bidirectional facilitative transporter that can regulate both intracellular and extracellular levels of cGMP and may be involved in cGMP signaling pathways. Mediates orotate/glutamate bidirectional exchange and most likely display a physiological role in hepatic release of glutamate into the blood. Involved in renal secretion and possible reabsorption of creatinine. Able to uptake prostaglandin E2 (PGE2) and may contribute to PGE2 renal excretion. Also transports alpha-ketoglutarate and urate. Unlike human hortolog, able to transport glutarate. Apart from the orotate/glutamate exchange, the counterions for the uptake of other SLC22A7/OAT2 substrates remain to be identified. This Mus musculus (Mouse) protein is Solute carrier family 22 member 7.